Here is a 1700-residue protein sequence, read N- to C-terminus: Probable serine/threonine-protein kinase ifkC (1700 aa).

The tract at residues 1–25 (MPPKPKQKAKQPSQQPPPPPPPAAA) is disordered. Residues 14 to 23 (QQPPPPPPPA) show a composition bias toward pro residues. One can recognise an RWD domain in the interval 74–197 (MELEALQAIF…EIAKDFLNEN (124 aa)). A compositionally biased stretch (polar residues) spans 454-463 (GLKKSPSTFE). The interval 454–488 (GLKKSPSTFEYSGEGGGGGVGGGSSQKTINPHQQS) is disordered. Gly residues predominate over residues 466 to 477 (GEGGGGGVGGGS). The segment covering 479–488 (QKTINPHQQS) has biased composition (polar residues). The Protein kinase domain occupies 494 to 1027 (FEEIQLLGRG…AQQLLQSELM (534 aa)). ATP contacts are provided by residues 500 to 508 (LGRGGFGQV) and Lys-523. 2 disordered regions span residues 568–639 (LTND…ENND) and 689–760 (GNNT…SSSK). Positions 572-639 (NSDDDDDDDD…SEFESEENND (68 aa)) are enriched in acidic residues. Residues 697-735 (SSNQHLQQQQQQNQSQQQKKQPQQNQSQQQKKLKNSNSK) show a composition bias toward low complexity. Positions 736 to 752 (SKSKSKSKSKSKSKSNS) are enriched in basic residues. Asp-822 functions as the Proton acceptor in the catalytic mechanism. Composition is skewed to low complexity over residues 850–875 (TSTLSPTTNINSSTSSAGSLTTSSNS), 1135–1158 (NNSSSSSSTTTTTSTTNTANNTNS), 1230–1240 (SSNGNSNNNNS), and 1509–1531 (NNSNNSSSSSSSSSSNNNNSYNN). Disordered regions lie at residues 850–901 (TSTL…EVEG), 1134–1160 (FNNSSSSSSTTTTTSTTNTANNTNSVV), 1216–1253 (KHHHQQQNDVRHDNSSNGNSNNNNSNDRHHDQDKSNTT), and 1507–1531 (NLNNSNNSSSSSSSSSSNNNNSYNN).

The protein belongs to the protein kinase superfamily. Ser/Thr protein kinase family. GCN2 subfamily.

The catalysed reaction is L-seryl-[protein] + ATP = O-phospho-L-seryl-[protein] + ADP + H(+). It carries out the reaction L-threonyl-[protein] + ATP = O-phospho-L-threonyl-[protein] + ADP + H(+). This Dictyostelium discoideum (Social amoeba) protein is Probable serine/threonine-protein kinase ifkC (ifkC).